The chain runs to 66 residues: Cold shock protein 1 (66 aa).

One can recognise a CSD domain in the interval Gly4–Val63. The segment at Val47–Gln66 is disordered.

Its subcellular location is the cytoplasm. The sequence is that of Cold shock protein 1 (csp) from Lactiplantibacillus plantarum (strain ATCC BAA-793 / NCIMB 8826 / WCFS1) (Lactobacillus plantarum).